Reading from the N-terminus, the 375-residue chain is Succinyl-diaminopimelate desuccinylase (375 aa).

Residue His66 coordinates Zn(2+). Asp68 is a catalytic residue. Asp99 provides a ligand contact to Zn(2+). Residue Glu133 is the Proton acceptor of the active site. Residues Glu134, Glu162, and His348 each contribute to the Zn(2+) site.

This sequence belongs to the peptidase M20A family. DapE subfamily. As to quaternary structure, homodimer. Zn(2+) serves as cofactor. The cofactor is Co(2+).

It catalyses the reaction N-succinyl-(2S,6S)-2,6-diaminopimelate + H2O = (2S,6S)-2,6-diaminopimelate + succinate. The protein operates within amino-acid biosynthesis; L-lysine biosynthesis via DAP pathway; LL-2,6-diaminopimelate from (S)-tetrahydrodipicolinate (succinylase route): step 3/3. Catalyzes the hydrolysis of N-succinyl-L,L-diaminopimelic acid (SDAP), forming succinate and LL-2,6-diaminopimelate (DAP), an intermediate involved in the bacterial biosynthesis of lysine and meso-diaminopimelic acid, an essential component of bacterial cell walls. The polypeptide is Succinyl-diaminopimelate desuccinylase (Salmonella choleraesuis (strain SC-B67)).